The sequence spans 859 residues: Leucine--tRNA ligase (859 aa).

Positions 42–52 match the 'HIGH' region motif; that stretch reads PYPSGRLHMGH. Positions 618 to 622 match the 'KMSKS' region motif; sequence KMSKS. K621 is an ATP binding site.

It belongs to the class-I aminoacyl-tRNA synthetase family.

It is found in the cytoplasm. The enzyme catalyses tRNA(Leu) + L-leucine + ATP = L-leucyl-tRNA(Leu) + AMP + diphosphate. This is Leucine--tRNA ligase from Shewanella baltica (strain OS195).